The chain runs to 143 residues: Flagellar assembly factor FliW (143 aa).

Belongs to the FliW family. As to quaternary structure, interacts with translational regulator CsrA and flagellin(s).

It is found in the cytoplasm. In terms of biological role, acts as an anti-CsrA protein, binds CsrA and prevents it from repressing translation of its target genes, one of which is flagellin. Binds to flagellin and participates in the assembly of the flagellum. The chain is Flagellar assembly factor FliW from Clostridium novyi (strain NT).